Reading from the N-terminus, the 37-residue chain is Photosystem II reaction center protein T (37 aa).

A helical transmembrane segment spans residues 3-23; it reads ALVYTFLLVGTLGIIFFAIFF.

Belongs to the PsbT family. PSII is composed of 1 copy each of membrane proteins PsbA, PsbB, PsbC, PsbD, PsbE, PsbF, PsbH, PsbI, PsbJ, PsbK, PsbL, PsbM, PsbT, PsbY, PsbZ, Psb30/Ycf12, at least 3 peripheral proteins of the oxygen-evolving complex and a large number of cofactors. It forms dimeric complexes.

It localises to the plastid. The protein localises to the chloroplast thylakoid membrane. Found at the monomer-monomer interface of the photosystem II (PS II) dimer, plays a role in assembly and dimerization of PSII. PSII is a light-driven water plastoquinone oxidoreductase, using light energy to abstract electrons from H(2)O, generating a proton gradient subsequently used for ATP formation. This Spirogyra maxima (Green alga) protein is Photosystem II reaction center protein T.